Consider the following 424-residue polypeptide: L-rhamnose isomerase (424 aa).

H261, D293, and D295 together coordinate Mn(2+).

The protein belongs to the rhamnose isomerase family. The cofactor is Mn(2+).

The protein localises to the cytoplasm. The catalysed reaction is L-rhamnopyranose = L-rhamnulose. Its pathway is carbohydrate degradation; L-rhamnose degradation; glycerone phosphate from L-rhamnose: step 1/3. Its function is as follows. Catalyzes the interconversion of L-rhamnose and L-rhamnulose. The chain is L-rhamnose isomerase from Bacillus subtilis (strain 168).